The sequence spans 399 residues: Argininosuccinate synthase (399 aa).

9 to 17 (AYSGGLDTS) is a binding site for ATP. Residue Y85 participates in L-citrulline binding. G115 provides a ligand contact to ATP. Residues T117, N121, and D122 each contribute to the L-aspartate site. Residue N121 coordinates L-citrulline. Positions 125, 173, 258, and 270 each coordinate L-citrulline.

Belongs to the argininosuccinate synthase family. Type 1 subfamily. As to quaternary structure, homotetramer.

The protein localises to the cytoplasm. The enzyme catalyses L-citrulline + L-aspartate + ATP = 2-(N(omega)-L-arginino)succinate + AMP + diphosphate + H(+). Its pathway is amino-acid biosynthesis; L-arginine biosynthesis; L-arginine from L-ornithine and carbamoyl phosphate: step 2/3. The chain is Argininosuccinate synthase from Streptococcus uberis (strain ATCC BAA-854 / 0140J).